The following is a 193-amino-acid chain: Adenylate kinase (193 aa).

11–16 is a binding site for ATP; the sequence is GAGKGT. Residues 31–60 form an NMP region; the sequence is STGDLLRAEVKAQTPLGCQAKVYMDAGELV. Residues threonine 32, arginine 37, 58 to 60, 85 to 88, and glutamine 92 contribute to the AMP site; these read ELV and GFPR. The interval 126–136 is LID; that stretch reads ARGKEQGRSDD. An ATP-binding site is contributed by arginine 127. AMP is bound by residues arginine 133 and arginine 145. Residue glutamine 173 participates in ATP binding.

It belongs to the adenylate kinase family. As to quaternary structure, monomer.

It localises to the cytoplasm. It carries out the reaction AMP + ATP = 2 ADP. The protein operates within purine metabolism; AMP biosynthesis via salvage pathway; AMP from ADP: step 1/1. Catalyzes the reversible transfer of the terminal phosphate group between ATP and AMP. Plays an important role in cellular energy homeostasis and in adenine nucleotide metabolism. The sequence is that of Adenylate kinase from Synechococcus sp. (strain JA-2-3B'a(2-13)) (Cyanobacteria bacterium Yellowstone B-Prime).